Here is a 569-residue protein sequence, read N- to C-terminus: Urease subunit alpha (569 aa).

In terms of domain architecture, Urease spans 132 to 569 (GGIDSHIHFI…LPLAQRYFLF (438 aa)). The Ni(2+) site is built by His137, His139, and Lys220. Lys220 carries the N6-carboxylysine modification. His222 contacts substrate. Residues His249 and His275 each coordinate Ni(2+). The active-site Proton donor is the His323. Residue Asp363 coordinates Ni(2+).

This sequence belongs to the metallo-dependent hydrolases superfamily. Urease alpha subunit family. In terms of assembly, heterotrimer of UreA (gamma), UreB (beta) and UreC (alpha) subunits. Three heterotrimers associate to form the active enzyme. The cofactor is Ni cation. Post-translationally, carboxylation allows a single lysine to coordinate two nickel ions.

The protein localises to the cytoplasm. The enzyme catalyses urea + 2 H2O + H(+) = hydrogencarbonate + 2 NH4(+). It participates in nitrogen metabolism; urea degradation; CO(2) and NH(3) from urea (urease route): step 1/1. This chain is Urease subunit alpha, found in Dechloromonas aromatica (strain RCB).